We begin with the raw amino-acid sequence, 715 residues long: Protein Hook homolog 1 (715 aa).

The Calponin-homology (CH) domain maps to 6–122 (TVLCESLIIW…RLLQLILGCA (117 aa)). Coiled-coil stretches lie at residues 167-434 (AGDT…DQLL) and 463-656 (IRLQ…EEKL).

The protein belongs to the hook family. As to quaternary structure, interacts with microtubules.

The protein localises to the cytoplasm. It is found in the cytoskeleton. Functionally, may function to promote vesicle trafficking and/or fusion. This Danio rerio (Zebrafish) protein is Protein Hook homolog 1 (hook1).